Here is a 394-residue protein sequence, read N- to C-terminus: Arogenate dehydratase 2 (394 aa).

The tract at residues 1–24 (MAATTTLRSPKIPHPPPESTPSNL) is disordered. A chloroplast-targeting transit peptide spans 1–47 (MAATTTLRSPKIPHPPPESTPSNLSYLSQISLTPVPKRRRFISIYAC). The 176-residue stretch at 108-283 (RVAYQGVRGA…NVTRFLMLAR (176 aa)) folds into the Prephenate dehydratase domain. In terms of domain architecture, ACT spans 297-388 (SVVFSLDEGP…TFLRVLGSYP (92 aa)).

As to expression, expressed at low levels in petals (corollas and tubes), stems, leaves, pistils, stamens, ovaries and sepals.

It is found in the plastid. Its subcellular location is the chloroplast stroma. The catalysed reaction is prephenate + H(+) = 3-phenylpyruvate + CO2 + H2O. It carries out the reaction L-arogenate + H(+) = L-phenylalanine + CO2 + H2O. Its pathway is amino-acid biosynthesis; L-phenylalanine biosynthesis; L-phenylalanine from L-arogenate: step 1/1. Its function is as follows. Converts the prephenate and L-arogenate produced from the shikimate-chorismate pathway into 3-phenylpyruvate and phenylalanine (Phe), respectively. Involved in floral volatile benzenoids and phenylpropanoids (FVBP) production. The protein is Arogenate dehydratase 2 of Petunia hybrida (Petunia).